The primary structure comprises 385 residues: Chaperone protein DnaJ (385 aa).

Residues 5–70 (DFYEVLGVSR…QKKAAYDQYG (66 aa)) form the J domain. The segment at 137–214 (GVSKEIEVPT…CHGQGRKQKT (78 aa)) adopts a CR-type zinc-finger fold. 8 residues coordinate Zn(2+): cysteine 150, cysteine 153, cysteine 167, cysteine 170, cysteine 189, cysteine 192, cysteine 202, and cysteine 205. 4 CXXCXGXG motif repeats span residues 150–157 (CDTCDGSG), 167–174 (CGTCHGHG), 189–196 (CPTCHGKG), and 202–209 (CNECHGQG).

It belongs to the DnaJ family. In terms of assembly, homodimer. Requires Zn(2+) as cofactor.

It localises to the cytoplasm. In terms of biological role, participates actively in the response to hyperosmotic and heat shock by preventing the aggregation of stress-denatured proteins and by disaggregating proteins, also in an autonomous, DnaK-independent fashion. Unfolded proteins bind initially to DnaJ; upon interaction with the DnaJ-bound protein, DnaK hydrolyzes its bound ATP, resulting in the formation of a stable complex. GrpE releases ADP from DnaK; ATP binding to DnaK triggers the release of the substrate protein, thus completing the reaction cycle. Several rounds of ATP-dependent interactions between DnaJ, DnaK and GrpE are required for fully efficient folding. Also involved, together with DnaK and GrpE, in the DNA replication of plasmids through activation of initiation proteins. In Vibrio harveyi (Beneckea harveyi), this protein is Chaperone protein DnaJ.